A 304-amino-acid chain; its full sequence is Putative S-adenosyl-L-methionine-dependent methyltransferase MUL_0816 (304 aa).

Residues Asp130 and 159–160 (DL) contribute to the S-adenosyl-L-methionine site.

This sequence belongs to the UPF0677 family.

Functionally, exhibits S-adenosyl-L-methionine-dependent methyltransferase activity. In Mycobacterium ulcerans (strain Agy99), this protein is Putative S-adenosyl-L-methionine-dependent methyltransferase MUL_0816.